Consider the following 414-residue polypeptide: Protein MAK11 (414 aa).

Ser2 is subject to N-acetylserine. WD repeat units follow at residues 50–78 (AHSL…RIYD), 90–135 (SHQG…MVWR), 147–177 (GHTA…RLWN), 189–221 (LRKY…LIYE), 238–267 (LMHI…HFYP), and 298–330 (GHTN…VVWD). Residues Ser376 and Ser380 each carry the phosphoserine modification. At Thr382 the chain carries Phosphothreonine.

As to quaternary structure, associates with 60S pre-ribosomal particles.

The protein resides in the nucleus. It localises to the nucleolus. The protein localises to the nucleus membrane. Functionally, essential for cell growth. Plays a role in assembly of 60S pre-ribosomal particles in the nucleolus. Also required for replication of the M1 double-stranded RNA of the L-A virus. This latter function may reflect an enhanced requirement for free 60S ribosomal particles for the translation of viral mRNAs which lack poly-A tails. This Saccharomyces cerevisiae (strain ATCC 204508 / S288c) (Baker's yeast) protein is Protein MAK11 (MAK11).